The following is an 83-amino-acid chain: Retinal cone rhodopsin-sensitive cGMP 3',5'-cyclic phosphodiesterase subunit gamma (83 aa).

Positions 1–17 (MSDNTVLAPPTSNQGPT) are enriched in polar residues. The disordered stretch occupies residues 1-51 (MSDNTVLAPPTSNQGPTTPRKGPPKFKQRQTRQFKSKPPKKGVKGFGDDIP). Basic residues predominate over residues 22–43 (GPPKFKQRQTRQFKSKPPKKGV).

Belongs to the rod/cone cGMP-PDE gamma subunit family. In terms of assembly, tetramer composed of two catalytic chains (alpha and beta), and two inhibitory chains (gamma).

The enzyme catalyses 3',5'-cyclic GMP + H2O = GMP + H(+). Participates in processes of transmission and amplification of the visual signal. cGMP-PDEs are the effector molecules in G-protein-mediated phototransduction in vertebrate rods and cones. This chain is Retinal cone rhodopsin-sensitive cGMP 3',5'-cyclic phosphodiesterase subunit gamma (PDE6H), found in Bos taurus (Bovine).